The primary structure comprises 309 residues: Porphobilinogen deaminase (309 aa).

C244 is subject to S-(dipyrrolylmethanemethyl)cysteine.

This sequence belongs to the HMBS family. In terms of assembly, monomer. It depends on dipyrromethane as a cofactor.

It catalyses the reaction 4 porphobilinogen + H2O = hydroxymethylbilane + 4 NH4(+). It functions in the pathway porphyrin-containing compound metabolism; protoporphyrin-IX biosynthesis; coproporphyrinogen-III from 5-aminolevulinate: step 2/4. Functionally, tetrapolymerization of the monopyrrole PBG into the hydroxymethylbilane pre-uroporphyrinogen in several discrete steps. This is Porphobilinogen deaminase from Listeria innocua serovar 6a (strain ATCC BAA-680 / CLIP 11262).